The chain runs to 234 residues: Large ribosomal subunit protein uL1 (234 aa).

The protein belongs to the universal ribosomal protein uL1 family. In terms of assembly, part of the 50S ribosomal subunit.

Its function is as follows. Binds directly to 23S rRNA. The L1 stalk is quite mobile in the ribosome, and is involved in E site tRNA release. In terms of biological role, protein L1 is also a translational repressor protein, it controls the translation of the L11 operon by binding to its mRNA. The protein is Large ribosomal subunit protein uL1 of Helicobacter acinonychis (strain Sheeba).